A 454-amino-acid chain; its full sequence is tRNA modification GTPase MnmE (454 aa).

Residues arginine 23, glutamate 80, and lysine 120 each coordinate (6S)-5-formyl-5,6,7,8-tetrahydrofolate. Positions 216–377 (GMKVVIAGRP…LRNHLKQSMG (162 aa)) constitute a TrmE-type G domain. Asparagine 226 provides a ligand contact to K(+). Residues 226–231 (NAGKSS), 245–251 (TDIAGTT), 270–273 (DTAG), 335–338 (NKAD), and 358–360 (SAR) each bind GTP. Serine 230 contributes to the Mg(2+) binding site. Residues threonine 245, isoleucine 247, and threonine 250 each coordinate K(+). Threonine 251 provides a ligand contact to Mg(2+). Lysine 454 provides a ligand contact to (6S)-5-formyl-5,6,7,8-tetrahydrofolate.

Belongs to the TRAFAC class TrmE-Era-EngA-EngB-Septin-like GTPase superfamily. TrmE GTPase family. As to quaternary structure, homodimer. Heterotetramer of two MnmE and two MnmG subunits. The cofactor is K(+).

It localises to the cytoplasm. Exhibits a very high intrinsic GTPase hydrolysis rate. Involved in the addition of a carboxymethylaminomethyl (cmnm) group at the wobble position (U34) of certain tRNAs, forming tRNA-cmnm(5)s(2)U34. This Yersinia enterocolitica serotype O:8 / biotype 1B (strain NCTC 13174 / 8081) protein is tRNA modification GTPase MnmE.